Reading from the N-terminus, the 212-residue chain is Nascent polypeptide-associated complex subunit alpha (212 aa).

Disordered regions lie at residues 1 to 54 (MSNP…SRNE) and 123 to 177 (QLAA…EDKD). Acidic residues predominate over residues 22–38 (AEDEGSDSSDSEAEGEE). The 66-residue stretch at 51–116 (SRNEKKARKS…AKIEDLNSQA (66 aa)) folds into the NAC-A/B domain. The span at 128 to 157 (ESHDHAGHDHSGHDHSHDHGKGKAVDTEEK) shows a compositional bias: basic and acidic residues. Acidic residues predominate over residues 158–169 (KEEEEDDTEEVD). Residues 173–212 (LEDKDIELVMTQASVSRNKAVKALKENDNDIVNSIMALSI) form the UBA domain.

This sequence belongs to the NAC-alpha family. As to quaternary structure, part of the nascent polypeptide-associated complex (NAC), consisting of EGD2 and EGD1. NAC associates with ribosomes via EGD1.

The protein localises to the cytoplasm. The protein resides in the nucleus. Its function is as follows. Component of the nascent polypeptide-associated complex (NAC), a dynamic component of the ribosomal exit tunnel, protecting the emerging polypeptides from interaction with other cytoplasmic proteins to ensure appropriate nascent protein targeting. The NAC complex also promotes mitochondrial protein import by enhancing productive ribosome interactions with the outer mitochondrial membrane and blocks the inappropriate interaction of ribosomes translating non-secretory nascent polypeptides with translocation sites in the membrane of the endoplasmic reticulum. EGD2 may also be involved in transcription regulation. This is Nascent polypeptide-associated complex subunit alpha (egd2) from Botryotinia fuckeliana (strain B05.10) (Noble rot fungus).